The sequence spans 389 residues: Pyruvylated Gal-beta-1,3-epitope synthesis protein 2 (389 aa).

Over 1-16 (MTKLWVNFFSQKLLRL) the chain is Cytoplasmic. Residues 17–37 (LIPSIIVVFAFAALFAIYSPI) traverse the membrane as a helical segment. Residues 38–389 (QLGGINFYKR…WSNSFDLITA (352 aa)) lie on the Lumenal side of the membrane.

The protein localises to the endoplasmic reticulum membrane. Its subcellular location is the golgi apparatus membrane. Its function is as follows. Involved in cell wall biogenesis. Has a role in the addition of Gal-beta1,3 moeities to galactomannans and their subsequent pyruvylation. Has a role in meiosis. This Schizosaccharomyces pombe (strain 972 / ATCC 24843) (Fission yeast) protein is Pyruvylated Gal-beta-1,3-epitope synthesis protein 2 (pvg2).